The sequence spans 118 residues: Small ribosomal subunit protein uS13 (118 aa).

The disordered stretch occupies residues 92-118 (RKGLPVRGQRTKTNARTRKGPRKPIRK).

Belongs to the universal ribosomal protein uS13 family. As to quaternary structure, part of the 30S ribosomal subunit. Forms a loose heterodimer with protein S19. Forms two bridges to the 50S subunit in the 70S ribosome.

In terms of biological role, located at the top of the head of the 30S subunit, it contacts several helices of the 16S rRNA. In the 70S ribosome it contacts the 23S rRNA (bridge B1a) and protein L5 of the 50S subunit (bridge B1b), connecting the 2 subunits; these bridges are implicated in subunit movement. Contacts the tRNAs in the A and P-sites. The sequence is that of Small ribosomal subunit protein uS13 from Pseudomonas putida (strain W619).